Here is a 212-residue protein sequence, read N- to C-terminus: Orotate phosphoribosyltransferase (212 aa).

Residues R97, K101, H103, and D123–S131 contribute to the 5-phospho-alpha-D-ribose 1-diphosphate site. S127 provides a ligand contact to orotate.

It belongs to the purine/pyrimidine phosphoribosyltransferase family. PyrE subfamily. Homodimer. The cofactor is Mg(2+).

It catalyses the reaction orotidine 5'-phosphate + diphosphate = orotate + 5-phospho-alpha-D-ribose 1-diphosphate. The protein operates within pyrimidine metabolism; UMP biosynthesis via de novo pathway; UMP from orotate: step 1/2. Functionally, catalyzes the transfer of a ribosyl phosphate group from 5-phosphoribose 1-diphosphate to orotate, leading to the formation of orotidine monophosphate (OMP). In Lactiplantibacillus plantarum (strain ATCC BAA-793 / NCIMB 8826 / WCFS1) (Lactobacillus plantarum), this protein is Orotate phosphoribosyltransferase.